A 400-amino-acid polypeptide reads, in one-letter code: 8-amino-7-oxononanoate synthase (400 aa).

Residue Arg-21 participates in substrate binding. Residue 112-113 (GY) coordinates pyridoxal 5'-phosphate. His-137 serves as a coordination point for substrate. Pyridoxal 5'-phosphate contacts are provided by Ser-183, His-211, and Thr-239. Lys-242 is modified (N6-(pyridoxal phosphate)lysine). Residue Thr-358 coordinates substrate.

The protein belongs to the class-II pyridoxal-phosphate-dependent aminotransferase family. BioF subfamily. In terms of assembly, homodimer. It depends on pyridoxal 5'-phosphate as a cofactor.

The catalysed reaction is 6-carboxyhexanoyl-[ACP] + L-alanine + H(+) = (8S)-8-amino-7-oxononanoate + holo-[ACP] + CO2. It functions in the pathway cofactor biosynthesis; biotin biosynthesis. In terms of biological role, catalyzes the decarboxylative condensation of pimeloyl-[acyl-carrier protein] and L-alanine to produce 8-amino-7-oxononanoate (AON), [acyl-carrier protein], and carbon dioxide. The polypeptide is 8-amino-7-oxononanoate synthase (Burkholderia lata (strain ATCC 17760 / DSM 23089 / LMG 22485 / NCIMB 9086 / R18194 / 383)).